Consider the following 68-residue polypeptide: Protein transport protein Sec61 subunit gamma (68 aa).

N-acetylmethionine is present on M1. The Cytoplasmic portion of the chain corresponds to 1 to 32; sequence MDQVMQFVEPSRQFVKDSIRLVKRCTKPDRKE. Phosphoserine is present on S18. The helical transmembrane segment at 33 to 61 threads the bilayer; it reads FQKIAMATAIGFAIMGFIGFFVKLIHIPI. The Extracellular portion of the chain corresponds to 62–68; sequence NNIIVGG.

It belongs to the SecE/SEC61-gamma family. In terms of assembly, the SEC61 channel-forming translocon complex consists of channel-forming core components SEC61A1, SEC61B and SEC61G and different auxiliary components such as SEC62 and SEC63. The SEC61 channel associates with the multi-pass translocon (MPT) complex.

It is found in the endoplasmic reticulum membrane. Functionally, component of SEC61 channel-forming translocon complex that mediates transport of signal peptide-containing precursor polypeptides across the endoplasmic reticulum (ER). Forms a ribosome receptor and a gated pore in the ER membrane, both functions required for cotranslational translocation of nascent polypeptides. The SEC61 channel is also involved in ER membrane insertion of transmembrane proteins: it mediates membrane insertion of the first few transmembrane segments of proteins, while insertion of subsequent transmembrane regions of multi-pass membrane proteins is mediated by the multi-pass translocon (MPT) complex. The SEC61 channel cooperates with the translocating protein TRAM1 to import nascent proteins into the ER. The sequence is that of Protein transport protein Sec61 subunit gamma (SEC61G) from Bos taurus (Bovine).